Reading from the N-terminus, the 200-residue chain is MARYTGPSWKVSRRLGISLSGTGKELERRPYAPGQHGPTQRKKISEYGLQQAEKQKLRHMYGLTERQFKNTFNKAGKLQGKHGENFMILLEQRLDNIVYRLGLARTRRAARQLVNHGHITVDGKRVDIPSYQVSVGQVISVREKSAKNSAIAESLEVSSFVPEYVTFDAETLTGSLNRLPERSELAAEINEAFIVEFYSR.

The segment at 22 to 43 (TGKELERRPYAPGQHGPTQRKK) is disordered. Residues 92–170 (QRLDNIVYRL…VPEYVTFDAE (79 aa)) form the S4 RNA-binding domain.

It belongs to the universal ribosomal protein uS4 family. In terms of assembly, part of the 30S ribosomal subunit. Contacts protein S5. The interaction surface between S4 and S5 is involved in control of translational fidelity.

Functionally, one of the primary rRNA binding proteins, it binds directly to 16S rRNA where it nucleates assembly of the body of the 30S subunit. With S5 and S12 plays an important role in translational accuracy. The chain is Small ribosomal subunit protein uS4 from Listeria innocua serovar 6a (strain ATCC BAA-680 / CLIP 11262).